The chain runs to 42 residues: Large ribosomal subunit protein bL36 (42 aa).

This sequence belongs to the bacterial ribosomal protein bL36 family.

The protein is Large ribosomal subunit protein bL36 of Wolbachia pipientis wMel.